Reading from the N-terminus, the 217-residue chain is Large ribosomal subunit protein uL1 (217 aa).

The protein belongs to the universal ribosomal protein uL1 family.

The protein is Large ribosomal subunit protein uL1 (RpL10A) of Spodoptera frugiperda (Fall armyworm).